A 180-amino-acid polypeptide reads, in one-letter code: Inner membrane-spanning protein YciB (180 aa).

A run of 6 helical transmembrane segments spans residues 4-24, 25-45, 49-69, 76-96, 118-138, and 150-170; these read LLSEIGPVIAFFAGFFYGGGI, QSATLYMLITSIICITLCYII, VSKLSIISSTVLFVSGIITLI, IKIKPTILYVIFGIIFLMSGI, IILSYRTAAFFFFMAVVNEVV, and FKVFGVIPITFIFILLQLPLL.

This sequence belongs to the YciB family.

It localises to the cell inner membrane. Plays a role in cell envelope biogenesis, maintenance of cell envelope integrity and membrane homeostasis. This is Inner membrane-spanning protein YciB from Rickettsia typhi (strain ATCC VR-144 / Wilmington).